Consider the following 343-residue polypeptide: Small ribosomal subunit biogenesis GTPase RsgA (343 aa).

Positions 116–275 constitute a CP-type G domain; it reads RGQLKPVAAN…LIDSPGIREF (160 aa). Residues 163–166 and 217–225 contribute to the GTP site; these read NKFD and GQSGVGKSS. Zn(2+)-binding residues include Cys-299, Cys-304, His-306, and Cys-312.

It belongs to the TRAFAC class YlqF/YawG GTPase family. RsgA subfamily. As to quaternary structure, monomer. Associates with 30S ribosomal subunit, binds 16S rRNA. It depends on Zn(2+) as a cofactor.

The protein resides in the cytoplasm. Its function is as follows. One of several proteins that assist in the late maturation steps of the functional core of the 30S ribosomal subunit. Helps release RbfA from mature subunits. May play a role in the assembly of ribosomal proteins into the subunit. Circularly permuted GTPase that catalyzes slow GTP hydrolysis, GTPase activity is stimulated by the 30S ribosomal subunit. In Pseudomonas fluorescens (strain Pf0-1), this protein is Small ribosomal subunit biogenesis GTPase RsgA.